A 108-amino-acid chain; its full sequence is uncharacterized protein (108 aa).

This is an uncharacterized protein from Methanocaldococcus jannaschii (strain ATCC 43067 / DSM 2661 / JAL-1 / JCM 10045 / NBRC 100440) (Methanococcus jannaschii).